We begin with the raw amino-acid sequence, 388 residues long: MRIAALLLAAGRGRRFDASSQSGENSSKQFRMLRGKPVIRRAAEALLPHVDVLLPVGDDPLLADSLEGLDILPPVSGGAERHDSVRNGLEALAKLPEPPDLVLVHDGARPCVPAEVVQNVINALKTHEGVIPAVAVIDTIKKAKDGIIVDTVPRDGLWRAQTPQGFRFGTLLELHRTHRDARTDDAALLEQAGHPVAIVEGSEDNIKLTVAEDLMRLEGVIDRNLLPRVGLGYDVHAFEEGRKLILCGIEVPHTKGLAGHSDADVGIHTLCDAIYGALAEGDIGRHFPPSDNKWKDMDSARFLVHAGERIRERGGFLVNADVTLICERPKIGPHAEAMRNRLADLLKVSVSRISVKATTSERLGFTGREEGIAATATVSIMVPDNGEA.

The 2-C-methyl-D-erythritol 4-phosphate cytidylyltransferase stretch occupies residues 1-228 (MRIAALLLAA…GVIDRNLLPR (228 aa)). A 2-C-methyl-D-erythritol 2,4-cyclodiphosphate synthase region spans residues 228–388 (RVGLGYDVHA…SIMVPDNGEA (161 aa)). A divalent metal cation is bound by residues aspartate 234 and histidine 236. 4-CDP-2-C-methyl-D-erythritol 2-phosphate contacts are provided by residues 234–236 (DVH) and 260–261 (HS). Histidine 268 contributes to the a divalent metal cation binding site. 4-CDP-2-C-methyl-D-erythritol 2-phosphate is bound by residues 282 to 284 (DIG), 358 to 361 (TTSE), phenylalanine 365, and arginine 368.

In the N-terminal section; belongs to the IspD/TarI cytidylyltransferase family. IspD subfamily. This sequence in the C-terminal section; belongs to the IspF family. It depends on a divalent metal cation as a cofactor.

The enzyme catalyses 2-C-methyl-D-erythritol 4-phosphate + CTP + H(+) = 4-CDP-2-C-methyl-D-erythritol + diphosphate. It catalyses the reaction 4-CDP-2-C-methyl-D-erythritol 2-phosphate = 2-C-methyl-D-erythritol 2,4-cyclic diphosphate + CMP. The protein operates within isoprenoid biosynthesis; isopentenyl diphosphate biosynthesis via DXP pathway; isopentenyl diphosphate from 1-deoxy-D-xylulose 5-phosphate: step 2/6. It participates in isoprenoid biosynthesis; isopentenyl diphosphate biosynthesis via DXP pathway; isopentenyl diphosphate from 1-deoxy-D-xylulose 5-phosphate: step 4/6. In terms of biological role, bifunctional enzyme that catalyzes the formation of 4-diphosphocytidyl-2-C-methyl-D-erythritol from CTP and 2-C-methyl-D-erythritol 4-phosphate (MEP) (IspD), and catalyzes the conversion of 4-diphosphocytidyl-2-C-methyl-D-erythritol 2-phosphate (CDP-ME2P) to 2-C-methyl-D-erythritol 2,4-cyclodiphosphate (ME-CPP) with a corresponding release of cytidine 5-monophosphate (CMP) (IspF). This Gluconobacter oxydans (strain 621H) (Gluconobacter suboxydans) protein is Bifunctional enzyme IspD/IspF.